The chain runs to 342 residues: N-alpha-acetyl-L-2,4-diaminobutyric acid deacetylase (342 aa).

The segment at 103 to 124 (TAGRRTSPMDGGNLNRSFPGDP) is disordered.

The protein belongs to the DoeB deacetylase family. Zn(2+) serves as cofactor.

It localises to the cytoplasm. It carries out the reaction (2S)-2-acetamido-4-aminobutanoate + H2O = L-2,4-diaminobutanoate + acetate. Involved in the degradation of ectoine, which allows H.elongata to utilize ectoine as both a carbon and a nitrogen source for growth. Catalyzes the deacetylation of N-alpha-acetyl-L-2,4-diaminobutyrate (N-alpha-Ac-DABA) to yield L-2,4-diaminobutyrate (DABA). The sequence is that of N-alpha-acetyl-L-2,4-diaminobutyric acid deacetylase from Halomonas elongata (strain ATCC 33173 / DSM 2581 / NBRC 15536 / NCIMB 2198 / 1H9).